A 212-amino-acid chain; its full sequence is uncharacterized protein (212 aa).

Positions 1–21 (MRRLTAFGLALLLLASGVARG) are cleaved as a signal peptide.

The protein to E.coli YfaT and T.maritima TM0986.

This is an uncharacterized protein from Pseudomonas aeruginosa (strain ATCC 15692 / DSM 22644 / CIP 104116 / JCM 14847 / LMG 12228 / 1C / PRS 101 / PAO1).